Consider the following 493-residue polypeptide: Lysine--tRNA ligase (493 aa).

Mg(2+) contacts are provided by E400 and E407.

It belongs to the class-II aminoacyl-tRNA synthetase family. As to quaternary structure, homodimer. Requires Mg(2+) as cofactor.

Its subcellular location is the cytoplasm. The catalysed reaction is tRNA(Lys) + L-lysine + ATP = L-lysyl-tRNA(Lys) + AMP + diphosphate. In Syntrophomonas wolfei subsp. wolfei (strain DSM 2245B / Goettingen), this protein is Lysine--tRNA ligase.